The sequence spans 138 residues: Sec-independent protein translocase protein TatB (138 aa).

Residues 2–18 (SFGEIIVILVVAILVLG) form a helical membrane-spanning segment. A disordered region spans residues 109–138 (NNLSGQNLNTEEKPNLSKLETQDKNGKINV). The segment covering 118–138 (TEEKPNLSKLETQDKNGKINV) has biased composition (basic and acidic residues).

It belongs to the TatB family. In terms of assembly, the Tat system comprises two distinct complexes: a TatABC complex, containing multiple copies of TatA, TatB and TatC subunits, and a separate TatA complex, containing only TatA subunits. Substrates initially bind to the TatABC complex, which probably triggers association of the separate TatA complex to form the active translocon.

It localises to the cell inner membrane. Functionally, part of the twin-arginine translocation (Tat) system that transports large folded proteins containing a characteristic twin-arginine motif in their signal peptide across membranes. Together with TatC, TatB is part of a receptor directly interacting with Tat signal peptides. TatB may form an oligomeric binding site that transiently accommodates folded Tat precursor proteins before their translocation. This chain is Sec-independent protein translocase protein TatB, found in Campylobacter jejuni subsp. jejuni serotype O:2 (strain ATCC 700819 / NCTC 11168).